The sequence spans 169 residues: Putative phosphoesterase SH1944 (169 aa).

Histidine 34 functions as the Proton donor in the catalytic mechanism. 2 short sequence motifs (HXTX) span residues 34 to 37 and 115 to 118; these read HITI and HFTI. Histidine 115 acts as the Proton acceptor in catalysis.

It belongs to the 2H phosphoesterase superfamily. YjcG family.

The polypeptide is Putative phosphoesterase SH1944 (Staphylococcus haemolyticus (strain JCSC1435)).